Consider the following 48-residue polypeptide: Large ribosomal subunit protein eL40 (48 aa).

The protein belongs to the eukaryotic ribosomal protein eL40 family.

The sequence is that of Large ribosomal subunit protein eL40 from Methanospirillum hungatei JF-1 (strain ATCC 27890 / DSM 864 / NBRC 100397 / JF-1).